The chain runs to 521 residues: Cyclic AMP-responsive element-binding protein 3-like protein 2 (521 aa).

The Cytoplasmic segment spans residues 1–378 (MEVLESGEQS…CKLAGTQTGT (378 aa)). Polar residues predominate over residues 83 to 103 (YSLSEEPRTQSPFTHAATSDS). The disordered stretch occupies residues 83 to 106 (YSLSEEPRTQSPFTHAATSDSFND). Serine 93 carries the post-translational modification Phosphoserine. Lysine 178 participates in a covalent cross-link: Glycyl lysine isopeptide (Lys-Gly) (interchain with G-Cter in SUMO2). At serine 191 the chain carries Phosphoserine. The segment at 196 to 264 (SVDQLHLPPT…PHKLQGSGPL (69 aa)) is disordered. Residues 208–220 (SSHSSDSEGSLSP) are compositionally biased toward low complexity. Positions 294–357 (ALKKIRRKIK…RTLLQQLQKL (64 aa)) constitute a bZIP domain. Positions 296–325 (KKIRRKIKNKISAQESRRKKKEYMDSLEKK) are basic motif. The interval 336 to 357 (LRKKVEVLENTNRTLLQQLQKL) is leucine-zipper. The helical; Signal-anchor for type II membrane protein transmembrane segment at 379–399 (CLMVVVLCFAVAFGSFFQGYG) threads the bilayer. Residues 400–521 (PYPSATKMAL…ELERRVNATF (122 aa)) lie on the Lumenal side of the membrane. An S1P recognition motif is present at residues 427-430 (RNLL). Residues asparagine 481, asparagine 505, and asparagine 518 are each glycosylated (N-linked (GlcNAc...) asparagine).

This sequence belongs to the bZIP family. ATF subfamily. Binds DNA as a dimer. Post-translationally, upon ER stress, translocated to the Golgi apparatus, where it is processed by regulated intramembrane proteolysis (RIP) to release the cytosol-facing N-terminal transcription factor domain. The cleavage is performed sequentially by site-1 and site-2 proteases (S1P/MBTPS1 and S2P/MBTPS2). In terms of processing, N-glycosylated. Ubiquitinated by HRD1/SYVN1; undergoes 'Lys-48'-linked ubiquitination, followed by rapid proteasomal degradation under normal conditions. Upon ER stress, SYVN1 E3 ubiquitin-protein ligase dissociates from its substrate, ubiquitination does not occur and CREB3L2 is stabilized. In terms of tissue distribution, widely expressed, including in lung, bladder, ovary, testis and spleen. Highly expressed in chondrocytes.

The protein localises to the endoplasmic reticulum membrane. It localises to the nucleus. Its function is as follows. Transcription factor involved in unfolded protein response (UPR). In the absence of endoplasmic reticulum (ER) stress, inserted into ER membranes, with N-terminal DNA-binding and transcription activation domains oriented toward the cytosolic face of the membrane. In response to ER stress, transported to the Golgi, where it is cleaved in a site-specific manner by resident proteases S1P/MBTPS1 and S2P/MBTPS2. The released N-terminal cytosolic domain is translocated to the nucleus to effect transcription of specific target genes. Plays a critical role in chondrogenesis by activating the transcription of SEC23A, which promotes the transport and secretion of cartilage matrix proteins, and possibly that of ER biogenesis-related genes. In a neuroblastoma cell line, protects cells from ER stress-induced death. In vitro activates transcription of target genes via direct binding to the CRE site. The sequence is that of Cyclic AMP-responsive element-binding protein 3-like protein 2 (Creb3l2) from Mus musculus (Mouse).